The following is a 191-amino-acid chain: Large ribosomal subunit protein uL3 (191 aa).

Residues 115 to 137 form a disordered region; that stretch reads GGPASHGSRFHRRHGSIGNREWP.

It belongs to the universal ribosomal protein uL3 family. Part of the 50S ribosomal subunit. Forms a cluster with proteins L14 and L19.

Its function is as follows. One of the primary rRNA binding proteins, it binds directly near the 3'-end of the 23S rRNA, where it nucleates assembly of the 50S subunit. The protein is Large ribosomal subunit protein uL3 (rplC) of Campylobacter jejuni subsp. jejuni serotype O:2 (strain ATCC 700819 / NCTC 11168).